A 335-amino-acid polypeptide reads, in one-letter code: Biotin synthase (335 aa).

The 230-residue stretch at 47-276 (FYGKKVKLNM…SKEIRISGGR (230 aa)) folds into the Radical SAM core domain. Positions 65, 69, and 72 each coordinate [4Fe-4S] cluster. Residues Cys109, Cys141, Cys201, and Arg271 each coordinate [2Fe-2S] cluster.

It belongs to the radical SAM superfamily. Biotin synthase family. In terms of assembly, homodimer. [4Fe-4S] cluster serves as cofactor. [2Fe-2S] cluster is required as a cofactor.

The enzyme catalyses (4R,5S)-dethiobiotin + (sulfur carrier)-SH + 2 reduced [2Fe-2S]-[ferredoxin] + 2 S-adenosyl-L-methionine = (sulfur carrier)-H + biotin + 2 5'-deoxyadenosine + 2 L-methionine + 2 oxidized [2Fe-2S]-[ferredoxin]. It functions in the pathway cofactor biosynthesis; biotin biosynthesis; biotin from 7,8-diaminononanoate: step 2/2. Its function is as follows. Catalyzes the conversion of dethiobiotin (DTB) to biotin by the insertion of a sulfur atom into dethiobiotin via a radical-based mechanism. This is Biotin synthase from Bacillus subtilis (strain 168).